The sequence spans 568 residues: 2-succinyl-5-enolpyruvyl-6-hydroxy-3-cyclohexene-1-carboxylate synthase (568 aa).

The protein belongs to the TPP enzyme family. MenD subfamily. Homodimer. It depends on Mg(2+) as a cofactor. Requires Mn(2+) as cofactor. Thiamine diphosphate is required as a cofactor.

It catalyses the reaction isochorismate + 2-oxoglutarate + H(+) = 5-enolpyruvoyl-6-hydroxy-2-succinyl-cyclohex-3-ene-1-carboxylate + CO2. The protein operates within quinol/quinone metabolism; 1,4-dihydroxy-2-naphthoate biosynthesis; 1,4-dihydroxy-2-naphthoate from chorismate: step 2/7. It functions in the pathway quinol/quinone metabolism; menaquinone biosynthesis. Catalyzes the thiamine diphosphate-dependent decarboxylation of 2-oxoglutarate and the subsequent addition of the resulting succinic semialdehyde-thiamine pyrophosphate anion to isochorismate to yield 2-succinyl-5-enolpyruvyl-6-hydroxy-3-cyclohexene-1-carboxylate (SEPHCHC). The chain is 2-succinyl-5-enolpyruvyl-6-hydroxy-3-cyclohexene-1-carboxylate synthase from Histophilus somni (strain 2336) (Haemophilus somnus).